Here is a 200-residue protein sequence, read N- to C-terminus: Phospholipase A2 inhibitor gamma subunit B (200 aa).

Positions 1-19 (MKSFLFCCLLGTFLAIGMC) are cleaved as a signal peptide. 8 disulfide bridges follow: Cys22-Cys46, Cys25-Cys32, Cys39-Cys67, Cys73-Cys94, Cys95-Cys100, Cys120-Cys145, Cys138-Cys165, and Cys171-Cys191. N-linked (GlcNAc...) asparagine glycosylation is present at Asn33.

The protein belongs to the CNF-like-inhibitor family. In terms of assembly, heterodimer of subunit A and subunit B. As to expression, expressed by the liver.

It localises to the secreted. Inhibits the enzymatic activity of phospholipase A2 (PA2). In Gloydius brevicaudus siniticus (Chinese mamushi), this protein is Phospholipase A2 inhibitor gamma subunit B.